The sequence spans 142 residues: Multiprotein-bridging factor 1b (142 aa).

Positions 49 to 75 (NAGSNKAASSGTSLNTKKLDDDTENLS) are disordered. Positions 50-64 (AGSNKAASSGTSLNT) are enriched in polar residues. Over residues 65–75 (KKLDDDTENLS) the composition is skewed to basic and acidic residues. Positions 87 to 141 (IMQARGEKKLTQSQLAHLINEKPQVIQEYESGKAIPNQQILSKLERALGAKLRGK) constitute an HTH cro/C1-type domain. The H-T-H motif DNA-binding region spans 98 to 117 (QSQLAHLINEKPQVIQEYES).

This sequence belongs to the MBF1 family. Expressed in leaves, roots, stems, petioles and shoots. Higher expression in flowers and siliques. Detected in leaf veins through development.

The protein resides in the nucleus. Its subcellular location is the nucleolus. Its function is as follows. Transcriptional coactivator that stimulates transcriptional activity by bridging regulatory proteins and TBP, thereby recruiting TBP to promoters occupied by DNA-binding regulators. The polypeptide is Multiprotein-bridging factor 1b (MBF1B) (Arabidopsis thaliana (Mouse-ear cress)).